Reading from the N-terminus, the 207-residue chain is Ras-related protein Rab-7a (207 aa).

Residue threonine 2 is modified to N-acetylthreonine. Residues serine 17, glycine 18, valine 19, glycine 20, lysine 21, threonine 22, serine 23, serine 34, asparagine 35, tyrosine 37, and threonine 40 each contribute to the GTP site. Mg(2+) is bound at residue threonine 22. The Switch 1 signature appears at 28–41 (YVNKKFSNQYKATI). The Mg(2+) site is built by threonine 40 and aspartate 63. GTP is bound at residue glycine 66. The Switch 2 motif lies at 67 to 82 (QERFQSLGVAFYRGAD). Serine 72 carries the post-translational modification Phosphoserine. GTP-binding residues include asparagine 125, lysine 126, aspartate 128, alanine 156, and lysine 157. Glycyl lysine isopeptide (Lys-Gly) (interchain with G-Cter in ubiquitin) cross-links involve residues lysine 191 and lysine 194. Residues cysteine 205 and cysteine 207 are each lipidated (S-geranylgeranyl cysteine). Residue cysteine 207 is modified to Cysteine methyl ester.

The protein belongs to the small GTPase superfamily. Rab family. As to quaternary structure, interacts with NTRK1/TRKA. Interacts with RILP. Interacts with PSMA7. Interacts with RNF115. Interacts with FYCO1. Interacts with the PIK3C3/VPS34-PIK3R4 complex. The GTP-bound form interacts with OSBPL1A. The GTP-bound form interacts with RAC1. Interacts with CLN3. Interacts with CHM, the substrate-binding subunit of the Rab geranylgeranyltransferase complex. Interacts with C9orf72. Does not interact with HPS4 and the BLOC-3 complex (heterodimer of HPS1 and HPS4). Interacts with CLN5. Interacts with PLEKHM1 (via N- and C-terminus). Interacts with PRPH; the interaction is direct. Interacts with VPS13A. The GDP-bound form interacts with RIMOC1. Interacts with the MON1A-CCZ1B complex and this interaction is enhanced in the presence of RIMOC1. Interacts with VPS39 and VPS41. Forms a ternary complex with LAMP2 and RUFY4; the interaction with LAMP2 is mediated by RUFY4 (via RUN and coiled coil domains). Requires Mg(2+) as cofactor. Deubiquitination at Lys-191 and Lys-194 by USP32. Post-translationally, phosphorylated at Ser-72 by LRRK1; phosphorylation is dependent on protein kinase C (PKC) activation of LRRK1. In terms of processing, prenylated. Prenylation is required for association with cellular membranes.

It is found in the cytoplasmic vesicle. It localises to the phagosome membrane. The protein localises to the late endosome membrane. The protein resides in the lysosome membrane. Its subcellular location is the melanosome membrane. It is found in the autophagosome membrane. It localises to the lipid droplet. The protein localises to the endosome membrane. The protein resides in the mitochondrion membrane. The enzyme catalyses GTP + H2O = GDP + phosphate + H(+). Its activity is regulated as follows. Regulated by guanine nucleotide exchange factors (GEFs) which promote the exchange of bound GDP for free GTP. Regulated by GTPase activating proteins (GAPs) which increase the GTP hydrolysis activity. Inhibited by GDP dissociation inhibitors (GDIs). Functionally, the small GTPases Rab are key regulators of intracellular membrane trafficking, from the formation of transport vesicles to their fusion with membranes. Rabs cycle between an inactive GDP-bound form and an active GTP-bound form that is able to recruit to membranes different sets of downstream effectors directly responsible for vesicle formation, movement, tethering and fusion. In its active state, RAB7A binds to a variety of effector proteins playing a key role in the regulation of endo-lysosomal trafficking. Governs early-to-late endosomal maturation, microtubule minus-end as well as plus-end directed endosomal migration and positioning, and endosome-lysosome transport through different protein-protein interaction cascades. Also plays a central role in growth-factor-mediated cell signaling, nutrient-transporter-mediated nutrient uptake, neurotrophin transport in the axons of neurons and lipid metabolism. Also involved in regulation of some specialized endosomal membrane trafficking, such as maturation of melanosomes, pathogen-induced phagosomes (or vacuoles) and autophagosomes. Plays a role in the maturation and acidification of phagosomes that engulf pathogens, such as S.aureus and Mycobacteria. Plays a role in the fusion of phagosomes with lysosomes. In concert with RAC1, plays a role in regulating the formation of RBs (ruffled borders) in osteoclasts. Controls the endosomal trafficking and neurite outgrowth signaling of NTRK1/TRKA. Regulates the endocytic trafficking of the EGF-EGFR complex by regulating its lysosomal degradation. Involved in the ADRB2-stimulated lipolysis through lipophagy, a cytosolic lipase-independent autophagic pathway. Required for the exosomal release of SDCBP, CD63 and syndecan. Required for vesicular trafficking and cell surface expression of ACE2. May play a role in PRPH neuronal intermediate filament assembly. This is Ras-related protein Rab-7a (RAB7A) from Canis lupus familiaris (Dog).